A 197-amino-acid polypeptide reads, in one-letter code: Nucleoid occlusion factor SlmA (197 aa).

Residues 7-67 (INRREHILQC…GLIEFIEESL (61 aa)) enclose the HTH tetR-type domain. Residues 30 to 49 (TTAKLAAEVGVSEAALYRHF) constitute a DNA-binding region (H-T-H motif). Residues 109-136 (DALLGENERLRSRISQLFAKIETHLKQI) are a coiled coil.

Belongs to the nucleoid occlusion factor SlmA family. Homodimer. Interacts with FtsZ.

It is found in the cytoplasm. It localises to the nucleoid. Required for nucleoid occlusion (NO) phenomenon, which prevents Z-ring formation and cell division over the nucleoid. Acts as a DNA-associated cell division inhibitor that binds simultaneously chromosomal DNA and FtsZ, and disrupts the assembly of FtsZ polymers. SlmA-DNA-binding sequences (SBS) are dispersed on non-Ter regions of the chromosome, preventing FtsZ polymerization at these regions. The polypeptide is Nucleoid occlusion factor SlmA (Shewanella halifaxensis (strain HAW-EB4)).